Consider the following 148-residue polypeptide: Lysozyme C (148 aa).

An N-terminal signal peptide occupies residues methionine 1 to glycine 18. A C-type lysozyme domain is found at lysine 19–valine 148. 4 cysteine pairs are disulfide-bonded: cysteine 24–cysteine 146, cysteine 48–cysteine 134, cysteine 83–cysteine 99, and cysteine 95–cysteine 113. Catalysis depends on residues glutamate 53 and aspartate 71.

The protein belongs to the glycosyl hydrolase 22 family. In terms of assembly, monomer.

Its subcellular location is the secreted. It carries out the reaction Hydrolysis of (1-&gt;4)-beta-linkages between N-acetylmuramic acid and N-acetyl-D-glucosamine residues in a peptidoglycan and between N-acetyl-D-glucosamine residues in chitodextrins.. Lysozymes have primarily a bacteriolytic function; those in tissues and body fluids are associated with the monocyte-macrophage system and enhance the activity of immunoagents. Also plays a role in digestion in this species. This Trachypithecus francoisi (Francois' leaf monkey) protein is Lysozyme C (LYZ).